Here is a 124-residue protein sequence, read N- to C-terminus: Small ribosomal subunit protein uS12 (124 aa).

The disordered stretch occupies residues 1–25 (MPTINQLIRKPRKSQKEKTASPALQ). Position 89 is a 3-methylthioaspartic acid (D89).

It belongs to the universal ribosomal protein uS12 family. In terms of assembly, part of the 30S ribosomal subunit. Contacts proteins S8 and S17. May interact with IF1 in the 30S initiation complex.

Functionally, with S4 and S5 plays an important role in translational accuracy. In terms of biological role, interacts with and stabilizes bases of the 16S rRNA that are involved in tRNA selection in the A site and with the mRNA backbone. Located at the interface of the 30S and 50S subunits, it traverses the body of the 30S subunit contacting proteins on the other side and probably holding the rRNA structure together. The combined cluster of proteins S8, S12 and S17 appears to hold together the shoulder and platform of the 30S subunit. The chain is Small ribosomal subunit protein uS12 from Borrelia duttonii (strain Ly).